The sequence spans 485 residues: Protein nucleotidyltransferase YdiU (485 aa).

Positions 90, 92, 93, 113, 125, 126, 176, and 183 each coordinate ATP. Asp-252 acts as the Proton acceptor in catalysis. 2 residues coordinate Mg(2+): Asn-253 and Asp-262. Position 262 (Asp-262) interacts with ATP.

It belongs to the SELO family. Mg(2+) is required as a cofactor. Requires Mn(2+) as cofactor.

It carries out the reaction L-seryl-[protein] + ATP = 3-O-(5'-adenylyl)-L-seryl-[protein] + diphosphate. The enzyme catalyses L-threonyl-[protein] + ATP = 3-O-(5'-adenylyl)-L-threonyl-[protein] + diphosphate. It catalyses the reaction L-tyrosyl-[protein] + ATP = O-(5'-adenylyl)-L-tyrosyl-[protein] + diphosphate. The catalysed reaction is L-histidyl-[protein] + UTP = N(tele)-(5'-uridylyl)-L-histidyl-[protein] + diphosphate. It carries out the reaction L-seryl-[protein] + UTP = O-(5'-uridylyl)-L-seryl-[protein] + diphosphate. The enzyme catalyses L-tyrosyl-[protein] + UTP = O-(5'-uridylyl)-L-tyrosyl-[protein] + diphosphate. Nucleotidyltransferase involved in the post-translational modification of proteins. It can catalyze the addition of adenosine monophosphate (AMP) or uridine monophosphate (UMP) to a protein, resulting in modifications known as AMPylation and UMPylation. This chain is Protein nucleotidyltransferase YdiU, found in Aliivibrio fischeri (strain MJ11) (Vibrio fischeri).